The following is a 581-amino-acid chain: Adenine deaminase (581 aa).

Belongs to the metallo-dependent hydrolases superfamily. Adenine deaminase family. Mn(2+) serves as cofactor.

It catalyses the reaction adenine + H2O + H(+) = hypoxanthine + NH4(+). The sequence is that of Adenine deaminase from Brucella abortus (strain 2308).